The chain runs to 147 residues: Large ribosomal subunit protein uL13 (147 aa).

The protein belongs to the universal ribosomal protein uL13 family. In terms of assembly, part of the 50S ribosomal subunit.

In terms of biological role, this protein is one of the early assembly proteins of the 50S ribosomal subunit, although it is not seen to bind rRNA by itself. It is important during the early stages of 50S assembly. In Pseudothermotoga lettingae (strain ATCC BAA-301 / DSM 14385 / NBRC 107922 / TMO) (Thermotoga lettingae), this protein is Large ribosomal subunit protein uL13.